The chain runs to 73 residues: MPIWLGILVGVVALVAGVALGFFIARKYMMNYLQKNPPINEQMLKMMMMQMGQKPSQKKINQMMSAMNKQQMK.

A helical transmembrane segment spans residues 3-23; that stretch reads IWLGILVGVVALVAGVALGFF.

This sequence belongs to the UPF0154 family.

The protein resides in the cell membrane. This is UPF0154 protein BCG9842_B1526 from Bacillus cereus (strain G9842).